Here is a 1957-residue protein sequence, read N- to C-terminus: [F-actin]-monooxygenase MICAL2 (1957 aa).

The monooxygenase domain stretch occupies residues Gly2 to Glu494. FAD contacts are provided by residues Cys97, Glu116–Arg118, Arg123–Asn125, Phe183, Tyr298, and Asp398. The region spanning Asp516–Glu619 is the Calponin-homology (CH) domain. Ser631 carries the post-translational modification Phosphoserine. The Nuclear localization signal signature appears at Arg660–Lys681. 2 disordered regions span residues Arg660 to Lys714 and Gln886 to His942. Residues Asp687–Lys714 are compositionally biased toward polar residues. Positions Pro899–Asp910 are enriched in pro residues. Low complexity predominate over residues Pro911–Pro925. The region spanning Asp1000–Asn1062 is the LIM zinc-binding domain. Zn(2+)-binding residues include Cys1002, Cys1005, His1023, Cys1026, Cys1029, Cys1032, Cys1052, and His1055. 6 disordered regions span residues Ala1070–Trp1143, Ser1168–Lys1243, Val1258–Pro1345, Gly1361–Pro1431, Lys1467–Cys1626, and Glu1675–Lys1779. The segment covering Ser1185–Trp1195 has biased composition (basic and acidic residues). Residues Arg1232–Lys1243 are compositionally biased toward polar residues. The segment covering Leu1275–Ser1294 has biased composition (low complexity). The segment covering Ser1302 to Ser1316 has biased composition (polar residues). An interaction with MAPK1 region spans residues Thr1324–Asp1363. 2 stretches are compositionally biased toward basic and acidic residues: residues Ser1388–Ser1402 and Gly1413–Pro1431. The segment covering Val1485–Arg1496 has biased composition (low complexity). The span at Gly1552–Ser1562 shows a compositional bias: basic and acidic residues. Polar residues predominate over residues Cys1570–Thr1579. Ser1688 carries the post-translational modification Phosphoserine. Residues Ala1718–Thr1733 are compositionally biased toward pro residues. Positions Ala1751–Ser1762 are enriched in low complexity. The region spanning Lys1796–Ser1945 is the bMERB domain.

This sequence belongs to the Mical family. In terms of assembly, interacts with PLXNA4. Interacts with RAB1B. Interacts with MAPK1/ERK2. Interacts with RAB35, RAB8A, RAB10, RAB13 and RAB15 (in their GTP-bound forms); binding to RAB35 is of low affinity compared to other Rab proteins; at least in case of RAB8A may bind 2 molecules of RAB8A simultaneously through a high and a low affinity binding site, respectively. May interact with MAPK1/ERK2. Interacts with CORO1C; this interaction recruits MICAL2 to the actin filaments. The cofactor is FAD.

It is found in the nucleus. The protein localises to the cytoplasm. The catalysed reaction is L-methionyl-[F-actin] + NADPH + O2 + H(+) = L-methionyl-(R)-S-oxide-[F-actin] + NADP(+) + H2O. With respect to regulation, specifically inhibited by CCG-1423, a small molecule inhibitor of SRF:MKL1/MRTF-A-dependent transcription. Functionally, methionine monooxygenase that promotes depolymerization of F-actin by mediating oxidation of residues 'Met-44' and 'Met-47' on actin to form methionine-sulfoxide, resulting in actin filament disassembly and preventing repolymerization. Regulates the disassembly of branched actin networks also by oxidizing ARP3B-containing ARP2/3 complexes leading to ARP3B dissociation from the network. Acts as a key regulator of the SRF signaling pathway elicited by nerve growth factor and serum: mediates oxidation and subsequent depolymerization of nuclear actin, leading to increase MKL1/MRTF-A presence in the nucleus and promote SRF:MKL1/MRTF-A-dependent gene transcription. Does not activate SRF:MKL1/MRTF-A through RhoA. The protein is [F-actin]-monooxygenase MICAL2 of Homo sapiens (Human).